Reading from the N-terminus, the 406-residue chain is Na(+)/H(+) antiporter NhaA (406 aa).

The next 12 helical transmembrane spans lie at 29–49, 75–95, 111–131, 141–161, 170–190, 195–215, 220–240, 242–262, 278–298, 306–326, 349–369, and 382–402; these read FAGILLIIAFTLAIIVSNNIF, FIELVNDGLMTFFFLLIGLEM, ILPAVAALGGVVVPVLIYMFF, GWAIPIATDTAFVLGILSFFS, AFIIGFSLIDDAFALIILALF, INTPALLISSVIIFILFILNY, QLFYYIIVGLLLWISMVESGI, GTLCGAIIALFIPVNIKGEFN, YFILPLFVFMNSGILLEYFAF, ILALIYGIIFGLFVGKQLGIM, FYSIAILGGIGFTLSLFIGSI, and AAVIIGSLISALFGVAVLKYC.

Belongs to the NhaA Na(+)/H(+) (TC 2.A.33) antiporter family.

Its subcellular location is the cell inner membrane. It carries out the reaction Na(+)(in) + 2 H(+)(out) = Na(+)(out) + 2 H(+)(in). In terms of biological role, na(+)/H(+) antiporter that extrudes sodium in exchange for external protons. This Rickettsia massiliae (strain Mtu5) protein is Na(+)/H(+) antiporter NhaA.